A 574-amino-acid polypeptide reads, in one-letter code: MRDGTPRANRLWGRLLVEELLRCGVGLFCVAPGSRSTPLVAAIAEHPRARALVHYDERGTAFAALGYARATGRPAAWVTTSGTAVANGLPAVAEAATDCVPMLLLTADRPPELRHTGANQTIEQPGIFGGYARWSFDVPPPGPDQDPATVLTTVDQAVYRSQRPPAGPVHLNLMFREPFLPQPAQPDGLPDLWPGDGPYTRYARAAPVPDEAEVRELASALGAAERGVVVAGRLRSRKQGEAAARLAAALGWPLLPDICSQARLGARPEVSAPYHDLLLAGGRFPGGRAPDAVVRVGGVPVSKRLQRYVTGRKPATYAVVADHPFRSDPEHLATHRLEADVAELCAALAGRVRRAAAPGWLSGWLRASGEAGRRLEAALRERKGLSEPGVARLVSRLIPEDHALVAASSMPVRDLDTFADPEGPPVPVAANRGASGIDGTVATAAGFARGAGRPVTLLIGDLALLHDLNSLAMLRGLPAVVVVLNNDGGGIFHFLPVAEHGGIFEPYFGTPHGLGFRQAAEMFGLGYSGPRTAGELSLAYQRACAEGGPHLIEVVTDRRENLALHRELLRGAAG.

It belongs to the TPP enzyme family. MenD subfamily. As to quaternary structure, homodimer. Mg(2+) serves as cofactor. It depends on Mn(2+) as a cofactor. Thiamine diphosphate is required as a cofactor.

The enzyme catalyses isochorismate + 2-oxoglutarate + H(+) = 5-enolpyruvoyl-6-hydroxy-2-succinyl-cyclohex-3-ene-1-carboxylate + CO2. The protein operates within quinol/quinone metabolism; 1,4-dihydroxy-2-naphthoate biosynthesis; 1,4-dihydroxy-2-naphthoate from chorismate: step 2/7. It functions in the pathway quinol/quinone metabolism; menaquinone biosynthesis. In terms of biological role, catalyzes the thiamine diphosphate-dependent decarboxylation of 2-oxoglutarate and the subsequent addition of the resulting succinic semialdehyde-thiamine pyrophosphate anion to isochorismate to yield 2-succinyl-5-enolpyruvyl-6-hydroxy-3-cyclohexene-1-carboxylate (SEPHCHC). The protein is 2-succinyl-5-enolpyruvyl-6-hydroxy-3-cyclohexene-1-carboxylate synthase of Rubrobacter xylanophilus (strain DSM 9941 / JCM 11954 / NBRC 16129 / PRD-1).